Consider the following 420-residue polypeptide: Probable acetate kinase (420 aa).

Asn-10 lines the Mg(2+) pocket. An ATP-binding site is contributed by Lys-17. Arg-97 is a substrate binding site. The active-site Proton donor/acceptor is Asp-153. Position 213-217 (213-217) interacts with ATP; the sequence is HIGSG. Glu-403 lines the Mg(2+) pocket.

It belongs to the acetokinase family. Mg(2+) is required as a cofactor.

It catalyses the reaction acetate + ATP = acetyl phosphate + ADP. The protein operates within metabolic intermediate biosynthesis; acetyl-CoA biosynthesis; acetyl-CoA from acetate: step 1/2. The chain is Probable acetate kinase from Emericella nidulans (strain FGSC A4 / ATCC 38163 / CBS 112.46 / NRRL 194 / M139) (Aspergillus nidulans).